The following is a 371-amino-acid chain: Bifunctional enzyme IspD/IspF (371 aa).

The segment at 1–210 (MSEMSLIMLA…LDLPTPSFEI (210 aa)) is 2-C-methyl-D-erythritol 4-phosphate cytidylyltransferase. The interval 211 to 371 (FTGNGFDVHE…NLKYFDWTRL (161 aa)) is 2-C-methyl-D-erythritol 2,4-cyclodiphosphate synthase. Asp-217 and His-219 together coordinate a divalent metal cation. 4-CDP-2-C-methyl-D-erythritol 2-phosphate contacts are provided by residues 217–219 (DVH) and 243–244 (HS). His-251 provides a ligand contact to a divalent metal cation. Residues 265–267 (DIG), 270–274 (YPDTD), 309–315 (AQSPKLK), 341–344 (TTTE), Phe-348, and Arg-351 contribute to the 4-CDP-2-C-methyl-D-erythritol 2-phosphate site.

It in the N-terminal section; belongs to the IspD/TarI cytidylyltransferase family. IspD subfamily. This sequence in the C-terminal section; belongs to the IspF family. It depends on a divalent metal cation as a cofactor.

It catalyses the reaction 2-C-methyl-D-erythritol 4-phosphate + CTP + H(+) = 4-CDP-2-C-methyl-D-erythritol + diphosphate. It carries out the reaction 4-CDP-2-C-methyl-D-erythritol 2-phosphate = 2-C-methyl-D-erythritol 2,4-cyclic diphosphate + CMP. It functions in the pathway isoprenoid biosynthesis; isopentenyl diphosphate biosynthesis via DXP pathway; isopentenyl diphosphate from 1-deoxy-D-xylulose 5-phosphate: step 2/6. The protein operates within isoprenoid biosynthesis; isopentenyl diphosphate biosynthesis via DXP pathway; isopentenyl diphosphate from 1-deoxy-D-xylulose 5-phosphate: step 4/6. Functionally, bifunctional enzyme that catalyzes the formation of 4-diphosphocytidyl-2-C-methyl-D-erythritol from CTP and 2-C-methyl-D-erythritol 4-phosphate (MEP) (IspD), and catalyzes the conversion of 4-diphosphocytidyl-2-C-methyl-D-erythritol 2-phosphate (CDP-ME2P) to 2-C-methyl-D-erythritol 2,4-cyclodiphosphate (ME-CPP) with a corresponding release of cytidine 5-monophosphate (CMP) (IspF). The polypeptide is Bifunctional enzyme IspD/IspF (Campylobacter jejuni subsp. jejuni serotype O:2 (strain ATCC 700819 / NCTC 11168)).